Consider the following 459-residue polypeptide: Exodeoxyribonuclease 7 large subunit (459 aa).

The protein belongs to the XseA family. Heterooligomer composed of large and small subunits.

Its subcellular location is the cytoplasm. The enzyme catalyses Exonucleolytic cleavage in either 5'- to 3'- or 3'- to 5'-direction to yield nucleoside 5'-phosphates.. Bidirectionally degrades single-stranded DNA into large acid-insoluble oligonucleotides, which are then degraded further into small acid-soluble oligonucleotides. This is Exodeoxyribonuclease 7 large subunit from Pseudomonas fluorescens (strain SBW25).